The primary structure comprises 181 residues: Protein CENTRORADIALIS (181 aa).

Belongs to the phosphatidylethanolamine-binding protein family. In terms of assembly, may form homodimers in solution.

The protein resides in the cytoplasm. Its function is as follows. Expression of CEN leads to a morphological switch between shoot growth and the development of flower structures (inflorescence). May form complexes with phosphorylated ligands by interfering with kinases and their effectors. This is Protein CENTRORADIALIS (CEN) from Antirrhinum majus (Garden snapdragon).